The following is a 161-amino-acid chain: 6,7-dimethyl-8-ribityllumazine synthase (161 aa).

Residues Trp-26, 58 to 60 (AFE), and 81 to 83 (VVI) contribute to the 5-amino-6-(D-ribitylamino)uracil site. 86–87 (GT) lines the (2S)-2-hydroxy-3-oxobutyl phosphate pocket. His-89 serves as the catalytic Proton donor. 5-amino-6-(D-ribitylamino)uracil is bound at residue Phe-114. Arg-128 serves as a coordination point for (2S)-2-hydroxy-3-oxobutyl phosphate.

This sequence belongs to the DMRL synthase family.

The catalysed reaction is (2S)-2-hydroxy-3-oxobutyl phosphate + 5-amino-6-(D-ribitylamino)uracil = 6,7-dimethyl-8-(1-D-ribityl)lumazine + phosphate + 2 H2O + H(+). Its pathway is cofactor biosynthesis; riboflavin biosynthesis; riboflavin from 2-hydroxy-3-oxobutyl phosphate and 5-amino-6-(D-ribitylamino)uracil: step 1/2. Its function is as follows. Catalyzes the formation of 6,7-dimethyl-8-ribityllumazine by condensation of 5-amino-6-(D-ribitylamino)uracil with 3,4-dihydroxy-2-butanone 4-phosphate. This is the penultimate step in the biosynthesis of riboflavin. This is 6,7-dimethyl-8-ribityllumazine synthase from Nocardioides sp. (strain ATCC BAA-499 / JS614).